The chain runs to 472 residues: MDYLPLFADLKRRPVLVVGGGEVAARKIDLLHRAGAQVRVVAQTLSSELEQLHQDGRIHWLALDFLPEQLDEVFLVIAATNDTALNAAVFAAADQRHLLANVVDDQPRCSFIFPSIVDRSPLVVAISSAGQAPVLARILREKLEALLPSSLGDMAAVAGRWRGRVKQHIASMGERRRFWENAFSGRFASLISRGQLAQAEEELQLSLEGQNRNQGEVALVGAGPGDPGLLTLRGLQVIQQADVVLYDHLVSPEVLDLVRRDAQRICVGKRAGAHSVAQEETNQLLVTLAQRGKRVVRLKGGDPFIFGRGGEELQVVARAGIPFHIVPGVTAASGATAYAGIPLTHRDYAQSVTFITGHCRADGDDVDWQALARGRQTLAIYMGTVKAAEISQQLIAHGRASTTPVAVIGRGTRADQQVLTGTLAELELLAHQAPTPALLVIGEVVDLHHQIAWFGQQPQTEQAISPSVVNLA.

Residues 1–203 (MDYLPLFADL…GQLAQAEEEL (203 aa)) are precorrin-2 dehydrogenase /sirohydrochlorin ferrochelatase. NAD(+) contacts are provided by residues 22-23 (EV) and 43-44 (QT). Serine 128 is modified (phosphoserine). The interval 215 to 472 (GEVALVGAGP…AISPSVVNLA (258 aa)) is uroporphyrinogen-III C-methyltransferase. Residue proline 224 coordinates S-adenosyl-L-methionine. Aspartate 247 serves as the catalytic Proton acceptor. Lysine 269 serves as the catalytic Proton donor. Residues 300-302 (GGD), isoleucine 305, 330-331 (TA), methionine 382, and glycine 411 contribute to the S-adenosyl-L-methionine site.

This sequence in the N-terminal section; belongs to the precorrin-2 dehydrogenase / sirohydrochlorin ferrochelatase family. It in the C-terminal section; belongs to the precorrin methyltransferase family.

It carries out the reaction uroporphyrinogen III + 2 S-adenosyl-L-methionine = precorrin-2 + 2 S-adenosyl-L-homocysteine + H(+). The catalysed reaction is precorrin-2 + NAD(+) = sirohydrochlorin + NADH + 2 H(+). The enzyme catalyses siroheme + 2 H(+) = sirohydrochlorin + Fe(2+). The protein operates within cofactor biosynthesis; adenosylcobalamin biosynthesis; precorrin-2 from uroporphyrinogen III: step 1/1. It participates in cofactor biosynthesis; adenosylcobalamin biosynthesis; sirohydrochlorin from precorrin-2: step 1/1. It functions in the pathway porphyrin-containing compound metabolism; siroheme biosynthesis; precorrin-2 from uroporphyrinogen III: step 1/1. Its pathway is porphyrin-containing compound metabolism; siroheme biosynthesis; siroheme from sirohydrochlorin: step 1/1. The protein operates within porphyrin-containing compound metabolism; siroheme biosynthesis; sirohydrochlorin from precorrin-2: step 1/1. Multifunctional enzyme that catalyzes the SAM-dependent methylations of uroporphyrinogen III at position C-2 and C-7 to form precorrin-2 via precorrin-1. Then it catalyzes the NAD-dependent ring dehydrogenation of precorrin-2 to yield sirohydrochlorin. Finally, it catalyzes the ferrochelation of sirohydrochlorin to yield siroheme. In Yersinia enterocolitica serotype O:8 / biotype 1B (strain NCTC 13174 / 8081), this protein is Siroheme synthase 1.